Reading from the N-terminus, the 309-residue chain is MSVGFIGAGQLAFALAKGFTAAGVLAAHKIMASSPDMDQATVSALRKIGVNLTPHNKETVRHSDVLFLAVKPHIIPFILDEIGANIEDRHIVVSCAAGVTINSIEKKLTAFQPAPKVIRCMTNTPVVVREGVTVYATGTHAQVEDGRLVEQLMGSVGFCTEVEEDLIDAVTGLSGSGPAYAFTALDALADGGVKMGLPRRLAVRLGAQALLGAAKMLLDSEQHPSQLKDNVCSPGGATIHALHVLESGGFRSLLINAVEASCIRTRELQTMADQETISPAAIKKTVLDKVKLDSSAGASLSSDHVKPLP.

S2 is modified (N-acetylserine). NADP(+)-binding positions include 6–11 (IGAGQL) and S34. NADPH is bound by residues A8, Q10, L11, S34, D36, N56, V70, K71, and A97. NADP(+) contacts are provided by residues N56, 69-72 (AVKP), and 95-97 (CAA). L-proline is bound at residue E164. N230 provides a ligand contact to NADPH. L-proline contacts are provided by A237 and T238. A phosphoserine mark is found at S278 and S301.

This sequence belongs to the pyrroline-5-carboxylate reductase family. In terms of assembly, homodecamer; composed of 5 homodimers. Interacts with LTO1. As to expression, highly expressed in osteoblasts and skin.

It is found in the mitochondrion. The catalysed reaction is L-proline + NADP(+) = (S)-1-pyrroline-5-carboxylate + NADPH + 2 H(+). It carries out the reaction L-proline + NAD(+) = (S)-1-pyrroline-5-carboxylate + NADH + 2 H(+). It participates in amino-acid biosynthesis; L-proline biosynthesis; L-proline from L-glutamate 5-semialdehyde: step 1/1. In terms of biological role, oxidoreductase that catalyzes the last step in proline biosynthesis, which corresponds to the reduction of pyrroline-5-carboxylate to L-proline using NAD(P)H. At physiologic concentrations, has higher specific activity in the presence of NADH. Involved in the cellular response to oxidative stress. The polypeptide is Pyrroline-5-carboxylate reductase 1, mitochondrial (Mus musculus (Mouse)).